Consider the following 302-residue polypeptide: 4-hydroxy-tetrahydrodipicolinate synthase (302 aa).

Residue threonine 55 coordinates pyruvate. The active-site Proton donor/acceptor is tyrosine 144. The Schiff-base intermediate with substrate role is filled by lysine 172. Valine 214 contributes to the pyruvate binding site.

The protein belongs to the DapA family. As to quaternary structure, homotetramer; dimer of dimers.

The protein localises to the cytoplasm. The catalysed reaction is L-aspartate 4-semialdehyde + pyruvate = (2S,4S)-4-hydroxy-2,3,4,5-tetrahydrodipicolinate + H2O + H(+). It functions in the pathway amino-acid biosynthesis; L-lysine biosynthesis via DAP pathway; (S)-tetrahydrodipicolinate from L-aspartate: step 3/4. Its function is as follows. Catalyzes the condensation of (S)-aspartate-beta-semialdehyde [(S)-ASA] and pyruvate to 4-hydroxy-tetrahydrodipicolinate (HTPA). The chain is 4-hydroxy-tetrahydrodipicolinate synthase from Prochlorococcus marinus (strain SARG / CCMP1375 / SS120).